The chain runs to 177 residues: Large ribosomal subunit protein uL6 (177 aa).

Belongs to the universal ribosomal protein uL6 family. Part of the 50S ribosomal subunit.

Functionally, this protein binds to the 23S rRNA, and is important in its secondary structure. It is located near the subunit interface in the base of the L7/L12 stalk, and near the tRNA binding site of the peptidyltransferase center. The protein is Large ribosomal subunit protein uL6 of Yersinia enterocolitica serotype O:8 / biotype 1B (strain NCTC 13174 / 8081).